The chain runs to 85 residues: Large ribosomal subunit protein bL27 (85 aa).

The interval Met-1 to Lys-24 is disordered.

Belongs to the bacterial ribosomal protein bL27 family.

This chain is Large ribosomal subunit protein bL27, found in Syntrophus aciditrophicus (strain SB).